The following is a 389-amino-acid chain: Putative glutamate--cysteine ligase 2 (389 aa).

It belongs to the glutamate--cysteine ligase type 2 family. YbdK subfamily.

It carries out the reaction L-cysteine + L-glutamate + ATP = gamma-L-glutamyl-L-cysteine + ADP + phosphate + H(+). Its function is as follows. ATP-dependent carboxylate-amine ligase which exhibits weak glutamate--cysteine ligase activity. In Rhodospirillum rubrum (strain ATCC 11170 / ATH 1.1.1 / DSM 467 / LMG 4362 / NCIMB 8255 / S1), this protein is Putative glutamate--cysteine ligase 2.